The chain runs to 529 residues: ATP synthase F(1) complex subunit beta, mitochondrial (529 aa).

The N-terminal 47 residues, 1-47, are a transit peptide targeting the mitochondrion; the sequence is MLGFVGRVAAAPASGALRRLTPSASLPPAQLLLRAAPTAVHPVRDYA. S106 carries O-linked (GlcNAc) serine glycosylation. 3 positions are modified to N6-acetyllysine; alternate: K124, K133, and K161. 3 positions are modified to N6-succinyllysine; alternate: K124, K133, and K161. Residue K198 is modified to N6-acetyllysine. ADP-binding residues include G209, V210, G211, K212, T213, and V214. An ATP-binding site is contributed by G209. Residues G209, V210, G211, K212, and T213 each contribute to the phosphate site. 4 residues coordinate ATP: G211, K212, T213, and V214. T213 is a Mg(2+) binding site. E238 is a Mg(2+) binding site. R239 is an ATP binding site. 2 positions are modified to N6-acetyllysine; alternate: K259 and K264. N6-succinyllysine; alternate is present on residues K259 and K264. T312 carries the post-translational modification Phosphothreonine. The residue at position 415 (S415) is a Phosphoserine. K426 is subject to N6-acetyllysine. Phosphoserine is present on S433. N6-acetyllysine is present on residues K480 and K485. An N6-acetyllysine; alternate modification is found at K522. An N6-succinyllysine; alternate modification is found at K522. At S529 the chain carries Phosphoserine.

This sequence belongs to the ATPase alpha/beta chains family. Homotrimer. Component of the ATP synthase complex composed at least of ATP5F1A/subunit alpha, ATP5F1B/subunit beta, ATP5MC1/subunit c (homooctomer), MT-ATP6/subunit a, MT-ATP8/subunit 8, ATP5ME/subunit e, ATP5MF/subunit f, ATP5MG/subunit g, ATP5MK/subunit k, ATP5MJ/subunit j, ATP5F1C/subunit gamma, ATP5F1D/subunit delta, ATP5F1E/subunit epsilon, ATP5PF/subunit F6, ATP5PB/subunit b, ATP5PD/subunit d, ATP5PO/subunit OSCP. ATP synthase complex consists of a soluble F(1) head domain (subunits alpha(3) and beta(3)) - the catalytic core - and a membrane F(0) domain - the membrane proton channel (subunits c, a, 8, e, f, g, k and j). These two domains are linked by a central stalk (subunits gamma, delta, and epsilon) rotating inside the F1 region and a stationary peripheral stalk (subunits F6, b, d, and OSCP). Interacts with PPIF. Interacts with BCL2L1 isoform BCL-X(L); the interaction mediates the association of BCL2L1 isoform BCL-X(L) with the mitochondrial membrane F(1)F(0) ATP synthase and enhances neurons metabolic efficiency. Interacts with CLN5 and PPT1. Interacts with S100A1; this interaction increases F1-ATPase activity. Interacts with MTLN. Interacts with TTC5/STRAP; the interaction results in decreased mitochondrial ATP production. Mg(2+) serves as cofactor.

The protein resides in the mitochondrion inner membrane. The enzyme catalyses ATP + H2O + 4 H(+)(in) = ADP + phosphate + 5 H(+)(out). Functionally, catalytic subunit beta, of the mitochondrial membrane ATP synthase complex (F(1)F(0) ATP synthase or Complex V) that produces ATP from ADP in the presence of a proton gradient across the membrane which is generated by electron transport complexes of the respiratory chain. ATP synthase complex consist of a soluble F(1) head domain - the catalytic core - and a membrane F(1) domain - the membrane proton channel. These two domains are linked by a central stalk rotating inside the F(1) region and a stationary peripheral stalk. During catalysis, ATP synthesis in the catalytic domain of F(1) is coupled via a rotary mechanism of the central stalk subunits to proton translocation. In vivo, can only synthesize ATP although its ATP hydrolase activity can be activated artificially in vitro. With the subunit alpha (ATP5F1A), forms the catalytic core in the F(1) domain. The sequence is that of ATP synthase F(1) complex subunit beta, mitochondrial from Homo sapiens (Human).